The primary structure comprises 667 residues: WD repeat-containing protein 48 homolog (667 aa).

WD repeat units lie at residues 26-65 (QHRN…NEKY), 71-110 (HHND…CMST), 113-152 (THRD…ALTA), 164-203 (GSKD…RSMK), 206-245 (GHTE…CVQT), 248-287 (VHKE…NKML), 290-329 (EEQA…RCTL), and 350-389 (KGGA…KKEQ). The interval 591–615 (ETTPSGGNANNSLQNSQSDANSEGS) is disordered.

This sequence belongs to the WD repeat WDR48 family. In terms of assembly, catalytic component of the Usp12-46 deubiquitylase complex consisting of Usp12-46, Wdr20 and Uaf1; regulatory subunit that, together wtih Wdr20, stabilizes Usp12-46. The Usp12-46 deubiquitylase complex associates with arr/arrow; the interaction leads to deubiquitination and stabilization of arr/arrow.

Its function is as follows. Regulatory component of the Usp12-46 deubiquitylase complex. activates deubiquitination by increasing the catalytic turnover without increasing the affinity of deubiquitinating enzymes for the substrate. The complex deubiquitylates the wg/wingless-signaling receptor arr/arrow, which stabilizes the receptor and increases its concentration at the cell surface; this enhances the sensitivity of cells to wg/wingless-signal stimulation. This increases the amplitude and spatial range of the signaling response to the wg/wingless morphogen gradient, facilitating the precise concentration-dependent regulation of its target genes. Together with Wdr20 and Usp12-46 required for wg/wingless-mediated signaling in the wing imaginal disc and for wg/wingless-dependent regulation of intestinal stem cell proliferation. The chain is WD repeat-containing protein 48 homolog from Drosophila ananassae (Fruit fly).